Reading from the N-terminus, the 210-residue chain is Orotate phosphoribosyltransferase (210 aa).

Residues arginine 97, lysine 101, histidine 103, and 123–131 (EDLISTGGS) contribute to the 5-phospho-alpha-D-ribose 1-diphosphate site. Serine 127 provides a ligand contact to orotate.

The protein belongs to the purine/pyrimidine phosphoribosyltransferase family. PyrE subfamily. As to quaternary structure, homodimer. Mg(2+) serves as cofactor.

The catalysed reaction is orotidine 5'-phosphate + diphosphate = orotate + 5-phospho-alpha-D-ribose 1-diphosphate. Its pathway is pyrimidine metabolism; UMP biosynthesis via de novo pathway; UMP from orotate: step 1/2. Catalyzes the transfer of a ribosyl phosphate group from 5-phosphoribose 1-diphosphate to orotate, leading to the formation of orotidine monophosphate (OMP). The polypeptide is Orotate phosphoribosyltransferase (Porphyromonas gingivalis (strain ATCC BAA-308 / W83)).